The chain runs to 460 residues: NADH-ubiquinone oxidoreductase chain 4 (460 aa).

The next 13 membrane-spanning stretches (helical) occupy residues 22–42 (WLWPTTLLHSLLIALASLSWL), 61–81 (PLSTPLLILSCWLLPLMILAS), 97–114 (YISLLTSLQFFLILAFSA), 118–140 (IMFYVMFEVTLIPTLILITRWGN), 149–169 (TYFLFYTLAGSLPLLVALLLL), 196–216 (IWWTGCILAFLVKMPLYGVHL), 226–246 (PIAGSMILAAVLLKLGGYGMM), 259–279 (LSYPFIILALWGVIMTGSICM), 286–305 (SLIAYSSVSHMGLVVGGILI), 309–331 (WGFTGALILMIAHGLTSSALFCL), 352–372 (MALPLMTAWWFIASLANLALP), 395–415 (IALTGLGMLITAGYSLYMFLM), and 437–457 (LLIALHLLPLLLLILKPELIW).

It belongs to the complex I subunit 4 family.

It is found in the mitochondrion membrane. The catalysed reaction is a ubiquinone + NADH + 5 H(+)(in) = a ubiquinol + NAD(+) + 4 H(+)(out). Its function is as follows. Core subunit of the mitochondrial membrane respiratory chain NADH dehydrogenase (Complex I) that is believed to belong to the minimal assembly required for catalysis. Complex I functions in the transfer of electrons from NADH to the respiratory chain. The immediate electron acceptor for the enzyme is believed to be ubiquinone. The polypeptide is NADH-ubiquinone oxidoreductase chain 4 (MT-ND4) (Tetraodon nigroviridis (Spotted green pufferfish)).